The sequence spans 304 residues: Non-specific ribonucleoside hydrolase RihC (304 aa).

H233 is a catalytic residue.

It belongs to the IUNH family. RihC subfamily.

Functionally, hydrolyzes both purine and pyrimidine ribonucleosides with a broad-substrate specificity. The sequence is that of Non-specific ribonucleoside hydrolase RihC from Shigella boydii serotype 4 (strain Sb227).